The following is a 97-amino-acid chain: Large ribosomal subunit protein bL31 (97 aa).

Positions Lys76–Leu97 are disordered. The segment covering Gly83–Leu97 has biased composition (basic and acidic residues).

Belongs to the bacterial ribosomal protein bL31 family. Type A subfamily. In terms of assembly, part of the 50S ribosomal subunit.

Its function is as follows. Binds the 23S rRNA. This chain is Large ribosomal subunit protein bL31, found in Mycoplasma pneumoniae (strain ATCC 29342 / M129 / Subtype 1) (Mycoplasmoides pneumoniae).